Reading from the N-terminus, the 188-residue chain is CXXC-type zinc finger protein 4 (188 aa).

Residues 1 to 20 (MHRNDSQRLGKPGGAPESLQ) form a disordered region. The CXXC-type zinc finger occupies 122-163 (AKKKRKRCGVCVPCKRLINCGVCSSCRNRKTGHQICKFRKCE). Zn(2+) contacts are provided by C129, C132, C135, C141, C144, C147, C157, and C162.

The protein resides in the cytoplasm. Acts as a negative regulator of the Wnt signaling pathway required for anterior neural structure formation. Binds preferentially to DNA containing cytidine-phosphate-guanosine (CpG) dinucleotides over CpH (H=A, T, and C), hemimethylated-CpG and hemimethylated-hydroxymethyl-CpG. The chain is CXXC-type zinc finger protein 4 (cxxc4) from Xenopus tropicalis (Western clawed frog).